A 200-amino-acid polypeptide reads, in one-letter code: Small ribosomal subunit protein mS26 (200 aa).

The transit peptide at 1–27 directs the protein to the mitochondrion; it reads MLRALNRLAARPETRPPTPLLLPVRGR. Residues 1-44 are disordered; the sequence is MLRALNRLAARPETRPPTPLLLPVRGRKTRHDPPAKSKVGRVQT. Position 159 is an N6-acetyllysine (Lys159).

Belongs to the mitochondrion-specific ribosomal protein mS26 family. In terms of assembly, component of the mitochondrial ribosome small subunit (28S) which comprises a 12S rRNA and about 30 distinct proteins.

It localises to the mitochondrion. The protein is Small ribosomal subunit protein mS26 (Mrps26) of Mus musculus (Mouse).